Here is a 128-residue protein sequence, read N- to C-terminus: Gas vesicle protein O (128 aa).

The interval 1–49 is disordered; the sequence is MANTPEDTQNTQNDSQNDSQNDSQKDTSARATSARAHQQPQEQPPSPMR. The span at 7-22 shows a compositional bias: low complexity; that stretch reads DTQNTQNDSQNDSQND. The segment covering 29-41 has biased composition (polar residues); that stretch reads ARATSARAHQQPQ.

It belongs to the gas vesicle GvpO family.

The protein localises to the gas vesicle. In terms of biological role, a minor component of the gas vesicle. May play a role in transcription and/or RNA stability and in GV assembly. Gas vesicles are hollow, gas filled proteinaceous nanostructures found in some microorganisms. It is not clear what function gas vesicles perform in soil bacteria. The sequence is that of Gas vesicle protein O from Streptomyces sp. (strain CB03234).